The following is a 577-amino-acid chain: Proline--tRNA ligase (577 aa).

The protein belongs to the class-II aminoacyl-tRNA synthetase family. ProS type 1 subfamily. Homodimer.

It localises to the cytoplasm. The enzyme catalyses tRNA(Pro) + L-proline + ATP = L-prolyl-tRNA(Pro) + AMP + diphosphate. Catalyzes the attachment of proline to tRNA(Pro) in a two-step reaction: proline is first activated by ATP to form Pro-AMP and then transferred to the acceptor end of tRNA(Pro). As ProRS can inadvertently accommodate and process non-cognate amino acids such as alanine and cysteine, to avoid such errors it has two additional distinct editing activities against alanine. One activity is designated as 'pretransfer' editing and involves the tRNA(Pro)-independent hydrolysis of activated Ala-AMP. The other activity is designated 'posttransfer' editing and involves deacylation of mischarged Ala-tRNA(Pro). The misacylated Cys-tRNA(Pro) is not edited by ProRS. The sequence is that of Proline--tRNA ligase from Janthinobacterium sp. (strain Marseille) (Minibacterium massiliensis).